The following is a 759-amino-acid chain: Xaa-Pro dipeptidyl-peptidase (759 aa).

Residues S347, D467, and H497 each act as charge relay system in the active site.

The protein belongs to the peptidase S15 family. Homodimer.

The protein localises to the cytoplasm. The catalysed reaction is Hydrolyzes Xaa-Pro-|- bonds to release unblocked, N-terminal dipeptides from substrates including Ala-Pro-|-p-nitroanilide and (sequentially) Tyr-Pro-|-Phe-Pro-|-Gly-Pro-|-Ile.. Its function is as follows. Removes N-terminal dipeptides sequentially from polypeptides having unsubstituted N-termini provided that the penultimate residue is proline. The sequence is that of Xaa-Pro dipeptidyl-peptidase from Streptococcus gordonii (strain Challis / ATCC 35105 / BCRC 15272 / CH1 / DL1 / V288).